Reading from the N-terminus, the 860-residue chain is Glucans biosynthesis glucosyltransferase H (860 aa).

6 consecutive transmembrane segments (helical) span residues 141 to 161, 187 to 207, 515 to 535, 572 to 592, 599 to 619, and 682 to 702; these read FILLLLMLAQTSVATYYMKGI, VLPYVIQFGILALFAILFCWV, VFLTGVMSYLSAPLWFFFLVL, LFSTTLTLLFLPKLLSVMLIW, FGGVIRVTLSMLLEMFFSVLL, and FLWWLSPIVGSLMLSIPVSVI.

Belongs to the glycosyltransferase 2 family. OpgH subfamily.

The protein localises to the cell inner membrane. Its pathway is glycan metabolism; osmoregulated periplasmic glucan (OPG) biosynthesis. Involved in the biosynthesis of osmoregulated periplasmic glucans (OPGs). The chain is Glucans biosynthesis glucosyltransferase H from Pseudomonas paraeruginosa (strain DSM 24068 / PA7) (Pseudomonas aeruginosa (strain PA7)).